An 862-amino-acid polypeptide reads, in one-letter code: Rab GTPase-binding effector protein 1 (862 aa).

N-acetylalanine is present on alanine 2. Residues 11–345 are a coiled coil; sequence DVSLQQRVAE…KKTDTEEEVK (335 aa). Lysine 282 carries the N6-acetyllysine modification. The interval 315–374 is disordered; sequence ELKKKDQEEDEQQRVNKRKDNKKTDTEEEVKIPVVCALTQEESSTPLSNEEEHLDSTHGS. Basic and acidic residues predominate over residues 336-345; sequence KKTDTEEEVK. 3 positions are modified to phosphoserine: serine 374, serine 377, and serine 407. Threonine 408 is subject to Phosphothreonine. Serine 410 carries the phosphoserine modification. Residues 534–816 are a coiled coil; it reads DMCSNYEKQL…LQTELDVSEQ (283 aa).

Belongs to the rabaptin family. Heterodimer with RABGEF1. The heterodimer binds RAB4A and RAB5A that have been activated by GTP-binding. Interacts with TSC2. Interacts with GGA1 (via GAE domain), GGA2 (via GAE domain) and GGA3 (via GAE domain). Interacts with AP1G1 (via GAE domain). Interacts with AP1G2 (via GAE domain). Interacts with ECPAS. Interacts with KCNH1. Interacts with PKD1 (via C-terminal domain) and GGA1; the interactions recruit PKD1:PKD2 complex to GGA1 and ARL3 at trans-Golgi network. Interacts with KCNH1. Post-translationally, proteolytic cleavage by caspases in apoptotic cells causes loss of endosome fusion activity.

The protein localises to the cytoplasm. The protein resides in the early endosome. It is found in the recycling endosome. Its subcellular location is the cytoplasmic vesicle. Functionally, rab effector protein acting as linker between gamma-adaptin, RAB4A and RAB5A. Involved in endocytic membrane fusion and membrane trafficking of recycling endosomes. Involved in KCNH1 channels trafficking to and from the cell membrane. Stimulates RABGEF1 mediated nucleotide exchange on RAB5A. Mediates the traffic of PKD1:PKD2 complex from the endoplasmic reticulum through the Golgi to the cilium. This chain is Rab GTPase-binding effector protein 1 (Rabep1), found in Mus musculus (Mouse).